We begin with the raw amino-acid sequence, 146 residues long: MGLTAHDRQLINSTWGKLCAKTIGQEALGRLLWTYPWTQRYFSSFGNLNSADAVFHNEAVAAHGEKVVTSIGEAIKHMDDIKGYYAQLSKYHSETLHVDPLNFKRFGGCLSIALARHFHEEYTPELHAAYEHLFDAIADALGKGYH.

The region spanning 2–146 (GLTAHDRQLI…IADALGKGYH (145 aa)) is the Globin domain. The heme b site is built by histidine 63 and histidine 92.

The protein belongs to the globin family. Heterotetramer of two alpha chains and two beta chains. In terms of tissue distribution, red blood cells.

Functionally, involved in oxygen transport from the lung to the various peripheral tissues. In Xenopus laevis (African clawed frog), this protein is Hemoglobin subunit beta-1 (hbb1).